A 104-amino-acid chain; its full sequence is Enhancer of rudimentary homolog 1 (104 aa).

Belongs to the E(R) family. Homodimer. Component of the erh1-mmi1 complex. Interacts with mmi1 (via N-terminus) in a 2:2 stoichiometry.

The protein resides in the nucleus. The protein localises to the cytoplasm. Its function is as follows. Forms part of the erh1-mmi1 complex that recruits the CCR4-NOT complex and the NURS complex to target RNAs. Suppresses the meiotic program during vegetative growth and promotes the meiotic program during mating. Recruitment of the NURS complex to target mRNAs promotes mRNA decay by engagement of the nuclear exosome, and formation of heterochromatin islands at meiotic genes silenced by the exosome. Recruitment of the CCR4-NOT complex to target RNAs promotes heterochromatin formation at RNAi-dependent heterochromatin domains (HOODs), including a subset of meiotic genes, lncRNAs and retrotransposons. Recruitment of the CCR4-NOT complex to rDNA promotes rDNA heterochromatin assembly. This chain is Enhancer of rudimentary homolog 1, found in Schizosaccharomyces pombe (strain 972 / ATCC 24843) (Fission yeast).